Reading from the N-terminus, the 229-residue chain is uncharacterized protein (229 aa).

A disordered region spans residues 1 to 102 (MKLLGRKKSY…AASKAQITDR (102 aa)). The span at 73-94 (ARRKSLAPPKCHRAERRAKRAA) shows a compositional bias: basic residues. 2 helical membrane passes run 137 to 157 (LGLF…VPQL) and 159 to 179 (LYMS…GIIL).

It localises to the cell membrane. This is an uncharacterized protein from Mycobacterium leprae (strain TN).